We begin with the raw amino-acid sequence, 209 residues long: Peptide methionine sulfoxide reductase MsrA (209 aa).

Cys-14 is an active-site residue. The disordered stretch occupies residues 183–209; that stretch reads FSALTTGGNQPGARGGLTNNTCQHPRH. Over residues 199 to 209 the composition is skewed to polar residues; the sequence is LTNNTCQHPRH.

Belongs to the MsrA Met sulfoxide reductase family.

It catalyses the reaction L-methionyl-[protein] + [thioredoxin]-disulfide + H2O = L-methionyl-(S)-S-oxide-[protein] + [thioredoxin]-dithiol. It carries out the reaction [thioredoxin]-disulfide + L-methionine + H2O = L-methionine (S)-S-oxide + [thioredoxin]-dithiol. Functionally, has an important function as a repair enzyme for proteins that have been inactivated by oxidation. Catalyzes the reversible oxidation-reduction of methionine sulfoxide in proteins to methionine. This is Peptide methionine sulfoxide reductase MsrA from Pseudomonas fluorescens.